A 454-amino-acid chain; its full sequence is Nucleoprotein (454 aa).

The disordered stretch occupies residues 1-62 (MSFVPGQENA…ATTQPNSGSV (62 aa)). Residues 11–21 (GSRSSSGSRSG) show a composition bias toward low complexity. Polar residues predominate over residues 49–61 (PKQTATTQPNSGS). Positions 56–197 (QPNSGSVVPH…GFYVEGSGRS (142 aa)) are RNA-binding. Residues 64–193 (PHYSWFSGIT…VLPQGFYVEG (130 aa)) form the CoV N NTD domain. Positions 109, 125, and 167 each coordinate RNA. 3 disordered regions span residues 159-230 (KTTA…STVK), 249-292 (AGQP…KRGP), and 382-428 (DGGA…RELT). At S170 the chain carries Phosphoserine; by host. T177 bears the Phosphothreonine; by host mark. A compositionally biased stretch (low complexity) spans 193–212 (GSGRSAPASRSGSRSQSRGP). A Phosphoserine; by host modification is found at S194. The span at 215 to 227 (RARSSSNQRQPAS) shows a compositional bias: polar residues. The CoV N CTD domain maps to 260-383 (AKEVRQKILN…ENLNAYQKDG (124 aa)). Over residues 267 to 277 (ILNKPRQKRTP) the composition is skewed to basic residues. The interval 267 to 383 (ILNKPRQKRT…ENLNAYQKDG (117 aa)) is dimerization. 2 positions are modified to phosphoserine; by host: S389 and S424. Position 428 is a phosphothreonine; by host (T428).

The protein belongs to the betacoronavirus nucleocapsid protein family. As to quaternary structure, homooligomer. Both monomeric and oligomeric forms interact with RNA. Interacts with protein M. Interacts with NSP3; this interaction serves to tether the genome to the newly translated replicase-transcriptase complex at a very early stage of infection. ADP-ribosylated. The ADP-ribosylation is retained in the virion during infection. In terms of processing, phosphorylated on serine and threonine residues.

The protein resides in the virion. It localises to the host endoplasmic reticulum-Golgi intermediate compartment. The protein localises to the host Golgi apparatus. In terms of biological role, packages the positive strand viral genome RNA into a helical ribonucleocapsid (RNP) and plays a fundamental role during virion assembly through its interactions with the viral genome and membrane protein M. Plays an important role in enhancing the efficiency of subgenomic viral RNA transcription as well as viral replication. In Murine coronavirus (strain S) (MHV-S), this protein is Nucleoprotein.